Reading from the N-terminus, the 363-residue chain is NAD(P)H-quinone oxidoreductase subunit 1, chloroplastic (363 aa).

Transmembrane regions (helical) follow at residues 26 to 46, 98 to 118, 127 to 147, 253 to 273, 300 to 320, and 336 to 356; these read IIWVLIPIFTPVLGITIGVLV, FSIGPSIAVISILLSYLVIPF, LSIGVFLWIAISSIAPVGLLM, FGLFYVASYLNLLVSSLFVTV, VFGTIIGIFITLAKTYLFLFI, and LLNLGWKFLLPISLGNLLLTT.

This sequence belongs to the complex I subunit 1 family. As to quaternary structure, NDH is composed of at least 16 different subunits, 5 of which are encoded in the nucleus.

The protein localises to the plastid. It is found in the chloroplast thylakoid membrane. The catalysed reaction is a plastoquinone + NADH + (n+1) H(+)(in) = a plastoquinol + NAD(+) + n H(+)(out). The enzyme catalyses a plastoquinone + NADPH + (n+1) H(+)(in) = a plastoquinol + NADP(+) + n H(+)(out). In terms of biological role, NDH shuttles electrons from NAD(P)H:plastoquinone, via FMN and iron-sulfur (Fe-S) centers, to quinones in the photosynthetic chain and possibly in a chloroplast respiratory chain. The immediate electron acceptor for the enzyme in this species is believed to be plastoquinone. Couples the redox reaction to proton translocation, and thus conserves the redox energy in a proton gradient. The protein is NAD(P)H-quinone oxidoreductase subunit 1, chloroplastic of Helianthus annuus (Common sunflower).